Reading from the N-terminus, the 89-residue chain is Small ribosomal subunit protein uS14A (89 aa).

It belongs to the universal ribosomal protein uS14 family. As to quaternary structure, part of the 30S ribosomal subunit. Contacts proteins S3 and S10.

Binds 16S rRNA, required for the assembly of 30S particles and may also be responsible for determining the conformation of the 16S rRNA at the A site. The chain is Small ribosomal subunit protein uS14A from Lactococcus lactis subsp. lactis (strain IL1403) (Streptococcus lactis).